We begin with the raw amino-acid sequence, 159 residues long: Prs ADP-ribosylating antitoxin (159 aa).

Residues E99–A159 form a sufficient to neutralize toxin region.

It belongs to the MbcA/ParS/Xre antitoxin family. As to quaternary structure, forms heterotetrameric ParS(2)-ParT(2) complexes. The 2 antitoxin fragments do not make contact in the crystal structure.

Antitoxin component of a type II toxin-antitoxin (TA) system. Neutralizes the bacteriostatic effect of cognate toxin ParT by inserting into its active site. This Sphingobium sp. (strain YBL2) protein is Prs ADP-ribosylating antitoxin.